Here is a 161-residue protein sequence, read N- to C-terminus: Dihydrofolate reductase type 1 from Tn4003 (161 aa).

The 156-residue stretch at 2 to 157 (TLSIIVAHDK…IPHTFLHLVR (156 aa)) folds into the DHFR domain. 6 to 8 (IVA) contributes to the substrate binding site. NADP(+) contacts are provided by residues 7 to 8 (VA) and 15 to 20 (IGYQNQ). Residue Asp28 coordinates substrate. An NADP(+)-binding site is contributed by 44-47 (ARKT). Residue Arg58 participates in substrate binding. Residues 63-66 (LTNQ) and 93-98 (FGGQTL) contribute to the NADP(+) site. Thr112 provides a ligand contact to substrate.

This sequence belongs to the dihydrofolate reductase family.

It carries out the reaction (6S)-5,6,7,8-tetrahydrofolate + NADP(+) = 7,8-dihydrofolate + NADPH + H(+). It participates in cofactor biosynthesis; tetrahydrofolate biosynthesis; 5,6,7,8-tetrahydrofolate from 7,8-dihydrofolate: step 1/1. Functionally, key enzyme in folate metabolism. Catalyzes an essential reaction for de novo glycine and purine synthesis, and for DNA precursor synthesis. This chain is Dihydrofolate reductase type 1 from Tn4003 (dfrA), found in Staphylococcus aureus.